We begin with the raw amino-acid sequence, 90 residues long: UPF0213 protein Reut_B5558 (90 aa).

The region spanning 5–80 (RQWYLYLLEC…KRMSSAQKIA (76 aa)) is the GIY-YIG domain.

It belongs to the UPF0213 family.

This is UPF0213 protein Reut_B5558 from Cupriavidus pinatubonensis (strain JMP 134 / LMG 1197) (Cupriavidus necator (strain JMP 134)).